The chain runs to 429 residues: Adenylosuccinate synthetase (429 aa).

GTP-binding positions include 12 to 18 (GDEGKGK) and 40 to 42 (GHT). The active-site Proton acceptor is the Asp-13. Mg(2+)-binding residues include Asp-13 and Gly-40. Residues 13–16 (DEGK), 38–41 (NAGH), Thr-128, Arg-142, Gln-223, Thr-238, and Arg-302 contribute to the IMP site. Residue His-41 is the Proton donor of the active site. 298–304 (TTTGRPR) provides a ligand contact to substrate. Residues Arg-304, 330–332 (SID), and 412–414 (SVG) contribute to the GTP site.

It belongs to the adenylosuccinate synthetase family. As to quaternary structure, homodimer. Mg(2+) is required as a cofactor.

It is found in the cytoplasm. The catalysed reaction is IMP + L-aspartate + GTP = N(6)-(1,2-dicarboxyethyl)-AMP + GDP + phosphate + 2 H(+). It participates in purine metabolism; AMP biosynthesis via de novo pathway; AMP from IMP: step 1/2. Functionally, plays an important role in the de novo pathway of purine nucleotide biosynthesis. Catalyzes the first committed step in the biosynthesis of AMP from IMP. The sequence is that of Adenylosuccinate synthetase from Bacillus thuringiensis (strain Al Hakam).